A 166-amino-acid polypeptide reads, in one-letter code: Succinate dehydrogenase [ubiquinone] cytochrome b small subunit, mitochondrial (166 aa).

Residues 1-65 (MASVARSSAL…VPPPSPSHGS (65 aa)) lie on the Mitochondrial matrix side of the membrane. Residues 66 to 87 (YHWTFDRVVAAGLIPLTVAPFA) form a helical membrane-spanning segment. Residues 88–94 (AGSLNPT) are Mitochondrial intermembrane-facing. A helical transmembrane segment spans residues 95–115 (MDAVLAATILIHSHTGFGNII). Histidine 106 is a heme binding site. The Mitochondrial matrix portion of the chain corresponds to 116–124 (VDYVPSKRV). An a ubiquinone-binding site is contributed by tyrosine 118. Residues 125 to 149 (PKARKVFTWGLNAATVLVGLALYEF) form a helical membrane-spanning segment. Residues 150 to 166 (ETTDVGLTETIKRVWKA) are Mitochondrial intermembrane-facing.

Belongs to the CybS family. As to quaternary structure, forms part of complex II containing four subunits: a flavoprotein (FP), an iron-sulfur protein (IP) and a cytochrome b composed of a large and a small subunit.

Its subcellular location is the mitochondrion inner membrane. It functions in the pathway carbohydrate metabolism; tricarboxylic acid cycle. Membrane-anchoring subunit of succinate dehydrogenase (SDH) that is involved in complex II of the mitochondrial electron transport chain and is responsible for transferring electrons from succinate to ubiquinone (coenzyme Q). The chain is Succinate dehydrogenase [ubiquinone] cytochrome b small subunit, mitochondrial from Neurospora crassa (strain ATCC 24698 / 74-OR23-1A / CBS 708.71 / DSM 1257 / FGSC 987).